The chain runs to 394 residues: Ribulose bisphosphate carboxylase large chain (394 aa).

Residue K5 is modified to N6,N6,N6-trimethyllysine. Positions 114 and 164 each coordinate substrate. K166 (proton acceptor) is an active-site residue. K168 is a binding site for substrate. Positions 192, 194, and 195 each coordinate Mg(2+). N6-carboxylysine is present on K192. The active-site Proton acceptor is the H285. Positions 286, 318, and 370 each coordinate substrate.

This sequence belongs to the RuBisCO large chain family. Type I subfamily. Heterohexadecamer of 8 large chains and 8 small chains; disulfide-linked. The disulfide link is formed within the large subunit homodimers. The cofactor is Mg(2+). The disulfide bond which can form in the large chain dimeric partners within the hexadecamer appears to be associated with oxidative stress and protein turnover.

The protein resides in the plastid. It localises to the chloroplast. The enzyme catalyses 2 (2R)-3-phosphoglycerate + 2 H(+) = D-ribulose 1,5-bisphosphate + CO2 + H2O. The catalysed reaction is D-ribulose 1,5-bisphosphate + O2 = 2-phosphoglycolate + (2R)-3-phosphoglycerate + 2 H(+). Its function is as follows. RuBisCO catalyzes two reactions: the carboxylation of D-ribulose 1,5-bisphosphate, the primary event in carbon dioxide fixation, as well as the oxidative fragmentation of the pentose substrate in the photorespiration process. Both reactions occur simultaneously and in competition at the same active site. The protein is Ribulose bisphosphate carboxylase large chain (rbcL) of Alisma plantago-aquatica (Common water-plantain).